We begin with the raw amino-acid sequence, 463 residues long: uncharacterized protein (463 aa).

The first 23 residues, 1–23 (MKFSSIPIASTLLSLLVASSVTA), serve as a signal peptide directing secretion. Disordered regions lie at residues 174–200 (STYN…TKAS) and 239–258 (GAST…QRKN).

It belongs to the but2 family.

It localises to the cytoplasm. This is an uncharacterized protein from Schizosaccharomyces pombe (strain 972 / ATCC 24843) (Fission yeast).